Here is a 70-residue protein sequence, read N- to C-terminus: Small ribosomal subunit protein bS21 (70 aa).

The tract at residues 43 to 70 (TERKRKAAAAVKRQHKRLRSLTLPPKLY) is disordered. Positions 45–61 (RKRKAAAAVKRQHKRLR) are enriched in basic residues.

Belongs to the bacterial ribosomal protein bS21 family.

The chain is Small ribosomal subunit protein bS21 from Dechloromonas aromatica (strain RCB).